Reading from the N-terminus, the 843-residue chain is Elongation factor 2 (843 aa).

Positions 17-344 (HNIRNMSVIA…MMIFHLPSPH (328 aa)) constitute a tr-type G domain. Residues 26 to 33 (AHVDHGKS) and 158 to 161 (NKMD) each bind GTP. Histidine 700 is modified (diphthamide). Serine 837 carries the phosphoserine modification.

This sequence belongs to the TRAFAC class translation factor GTPase superfamily. Classic translation factor GTPase family. As to quaternary structure, may interact with glutaredoxins (Grxs). Expressed in root, stem, leaves, flowers and siliques.

The protein resides in the cytoplasm. It carries out the reaction GTP + H2O = GDP + phosphate + H(+). Its pathway is protein biosynthesis; polypeptide chain elongation. Catalyzes the GTP-dependent ribosomal translocation step during translation elongation. During this step, the ribosome changes from the pre-translocational (PRE) to the post-translocational (POST) state as the newly formed A-site-bound peptidyl-tRNA and P-site-bound deacylated tRNA move to the P and E sites, respectively. Catalyzes the coordinated movement of the two tRNA molecules, the mRNA and conformational changes in the ribosome. Involved in cold responses leading to freezing tolerance via the induction of cold-responsive genes. This chain is Elongation factor 2, found in Arabidopsis thaliana (Mouse-ear cress).